Here is a 215-residue protein sequence, read N- to C-terminus: MKLGLIGKKIGMTRVFTESGNSIPVTVLDVSGNRVVQVKTEEKDGYSAVQLTQGYRRKNRITKALSGHFSQAGVEAGTVIKEFRVDHDIGSDIKIGSEISVELFEVGSKVDVCGISIGKGYAGTIKRHNFSSSRASHGNSRSHNVPGSIGMAQDPGRVFPGKKMTGHLGNAQCTVQNIEVVRVDAGRGLLFLKGSVPGSKGNGVFIRPGVKQPSK.

Positions Ser-131–Asn-144 are enriched in low complexity. Residues Ser-131–Gly-150 form a disordered region. The residue at position 153 (Gln-153) is an N5-methylglutamine.

The protein belongs to the universal ribosomal protein uL3 family. As to quaternary structure, part of the 50S ribosomal subunit. Forms a cluster with proteins L14 and L19. Methylated by PrmB.

One of the primary rRNA binding proteins, it binds directly near the 3'-end of the 23S rRNA, where it nucleates assembly of the 50S subunit. The sequence is that of Large ribosomal subunit protein uL3 from Nitrosomonas europaea (strain ATCC 19718 / CIP 103999 / KCTC 2705 / NBRC 14298).